The sequence spans 2499 residues: MIEGNIEKNNDNQVAIVGLGLRLPGNSGSPSEFWKNLLGGFDGIVDSNERWSDTFHSMGEISNKNAGLIDLEENWHSFEPLFFGINPTDAKQIDPQIKLMLKLTWEAFEDASIDPLKLRGTNTSVFVGAANTDYSFINFEQNEAPINVFNGTLSAFANRISYCFDLRGTSLTLDTACSSSLNAVHLGYESIVNGKSNYSVVAGCNILLNPYITRSFHSINITGKSGRCNSFDESADGFVRSEGVVVLILKRLSLAIQDGDQIYCVMKGSSSNVDGTFKKTNFFAPSKNAQSTNIKNAFLSSNGAMKYQDIDFFELHSTGTQVGDPIEVEAVADIFKNVKQEPLLIGSVKSNIGHLEPASGVASLAKVCLMFKHRQFVKNIHFNNPNPNIKFKEWNVKVCTETTAFPDRQVSMAINSFGITGSNACVLLSEYIKPSELKNQTSMKLNEKSKLLIPISTNSKKSLEQFKSKLLEEIDTYSESLTFEEFAMFQVYSKTTKLSQRSVLIGNDWNDLKIDINEIISTKNNKSGNIIKSNDINPPLVFSFCGQGPQYSKMGLNLYENEPIYKQSMDILDSILFKYFGYSIIQKLRSINDDPILINEPILAQPSIFMIQISLYKLYLHWGITPSIIVGHSLGEVASAFCSGMIDLETACFVIYKRATIQNKTNGSGRLLAISLNLEEFNNQFSKEYPEIEISCFNSPSSIVVCGNELDILNISKSLKDKQIFNSLLGTSSAFHSSKQDIIKDEIIESTNHIQSRPPSITTFSTVTSNKFDKNTPYNSSYIFDNLRKPVLFQQTIENIFKHIESNDLGNSVIFLELSPHPTLNHYVKEMIPKNSNYFLNKDSISVLSSLNKKKEDINEIQSTISQLYCFGYNVDFSAQFKSEITSNSFKKCSYLIPHYQWDESLFWREGISSLNNRKNGAPINQLGNKNESSPHISYTSYIDIKEEPFRFLKDHQFRGKSLFPGVGYLDIILKLFPNQDLTIPLLEFKSQFVLTEGVKKTLTTNLYKSAKNEYRATFNFKDQTSGKWIQSANSRILMKSLDVTVKKVDVQSIRDQCNWSTLKREQLYDLIKNYANISLLEPFQRIEEASYGDNRCLCKVSLDPTSSYDNESFLNICIIDTCIHPCIFFDNPASSVFERIEHLKIYSSSVPLTAEDRVKQQYVYCYAELIKQFSDFIYFKTTCFLKDGTVLLHSPLVTIASTLSTKSETDLECPNNQLFSQCLQPKDSILQSPLILKEHFNQQLQLQQSNIISISTLSTYLFSILKKRLNNLTVDEFQNNSLEQLIEKYSYVLDEVEVGTIRSNLILLTINFLLTHHKHIDQNQVSNFLLNNIPNELLVVDTIVSNKGISHIGIYQHQLILDIISKSIIPIVNEKIVFRILEIGCGVGELTKLINDNLESILNDNPSYNIDIEFVFSDYTDSKVLLIKERLFNSKKSCFFKIIDLNKQLQEQSFSPSYYDLIILSNTTNQIKDIKTSISFINEILTPNGHLLILDTNFIQTSIDEDYYLENYKQWLSFNYLNSGSGAMKLNQWNQLLINDLKFNNFICSTGEIEPYLIQVQKPNLSNSINSVSKEHTSEYDQIIIFGTCDEINIGSSFCGSGGVVPIAINSIDKFKEHAKLQPLTDKSLILFIESVNLLTVDNFNQVSMNYIEINQHLLKNEISGCKHILISRNINFETSNLFGSSLIGSFRYFCEFNQLNIYSFEFEGNNILSGGDKLFNIIQELSNSNKHSQNEFSIRSDGKIYYERIKLESNLKLKYKSKSYIENKNELVSRLKPDLTFALEAVLPLNPNFVEVKVMASGVNFKDFLVYRQLINMANSNENGDPSKPQFGYELSGIVTKVGKNVTKFKVGDHVMGVTFHTFSSSVHVDQDRIELKPSNISWFEASISLVYLTSYCSLFELGRLGLHGSTETVLIHSGSGGIGLSCIDLLQVYGFKGFLFVTVGSEEKKQFLKDRYGNFITEIYSTKNTDYEYLIKEKLIELKAPSQEYGGFSMICVDLIINTLSADYMDANFNCLSQGGRIIDLSITHMTTTDTTDFYKFKNHIGYMTYESVIAGFRKHKHVLKIIVDLLASGKLKTIPFNVYPVTKIKEAIESLGDRKHIGKNIVNFNDPEGIDLIDCPEFSNNHNFIHRSSNYKIHQDTLGQTILITGQAGLSDTIIKWIREKRSDSIESIIVLSKSPIKFELERAIGRIRSTNLKIYFKQVDISDEKLLLKTINQLFEENKDIKPIESIFHNAFSPAECEPLEIDMNHLISSHSAKSMGAYNLHKLSLNWPIKQFVLSSSVTSILGSQRQCGYVASNCFIDALSRHRKSLNLPCISINWGLLGGGGFAARNDAVFKLFELQGLVGISKDLVWGSLDLLLQNQNESTNKMVASFEFHATCKTYKNHKLSYKLDYFLNPIISKESVTDEKEFSIRQDIVDKFASLLSTDQSKLNLDIKVIDYGADSLLVVEVKNWADNKFTRNILSMPEIQNSTINQIINIVTTKVSNLPSKKK.

Residues aspartate 11–glutamate 430 enclose the Ketosynthase family 3 (KS3) domain. Residues cysteine 177, histidine 316, and histidine 354 each act as for beta-ketoacyl synthase activity in the active site. The tract at residues glycine 623–tyrosine 656 is acyl/malonyl transferases. Catalysis depends on serine 633, which acts as the For acyl/malonyl transferase activity. An N-terminal hotdog fold region spans residues alanine 922–valine 1044. In terms of domain architecture, PKS/mFAS DH spans alanine 922–glutamate 1209. Histidine 956 (proton acceptor; for dehydratase activity) is an active-site residue. The C-terminal hotdog fold stretch occupies residues asparagine 1059–glutamate 1209. Aspartate 1121 (proton donor; for dehydratase activity) is an active-site residue. One can recognise a Carrier domain in the interval glutamate 2414–valine 2491. At serine 2451 the chain carries O-(pantetheine 4'-phosphoryl)serine.

The cofactor is pantetheine 4'-phosphate.

In terms of biological role, probable polyketide synthase. The chain is Probable polyketide synthase 22 (pks22) from Dictyostelium discoideum (Social amoeba).